The primary structure comprises 478 residues: Ribosome biogenesis protein NOP53 (478 aa).

Gly residues predominate over residues 1 to 10 (MAAGGSGVGG). The interval 1–51 (MAAGGSGVGGKRSSKSDADSGFLGLRPTSVDPALRRRRRGPRNKKRGWRRL) is disordered. A2 carries the N-acetylalanine modification. Phosphoserine is present on S29. Over residues 35-49 (RRRRRGPRNKKRGWR) the composition is skewed to basic residues. Phosphoserine occurs at positions 93 and 305. The interval 148 to 431 (KEQLWEKLAK…SELTDSLRTL (284 aa)) is mediates interaction with CDKN2A/isoform tumor suppressor ARF. Residues 181–478 (KPGPQDTVER…EKRAFREIQL (298 aa)) form a mediates interaction with NF2 region. Positions 303 to 344 (EESDGEGEPGQGEGPEAGDAEVCPTPARLATTEKKTEQQRRR) are disordered. The segment covering 333–342 (TTEKKTEQQR) has biased composition (basic and acidic residues). The interval 342–386 (RRREKAVHRLRVQQAALRAARLRHQELFRLRGIKAQVALRLAELA) is mediates interaction with human herpesvirus 8 protein ORF16. Nucleolar localization signal regions lie at residues 347–395 (AVHR…RQAR) and 396–478 (REAE…EIQL).

It belongs to the NOP53 family. Homooligomer. Interacts with PTEN; regulates PTEN phosphorylation and increases its stability. Interacts with RPL11; retains RPL11 into the nucleolus. Interacts with CDKN2A/isoform tumor suppressor ARF; the interaction is direct and promotes ARF nucleoplasmic relocalization and ubiquitin-mediated proteasomal degradation. Interacts with NPM1; the interaction is direct and competitive with MYC. Interacts with NF2 (via FERM domain); the interaction is direct. Interacts with p53/TP53 (via the oligomerization region); the interaction is direct and may prevent the MDM2-mediated proteasomal degradation of p53/TP53. Interacts with RIGI; may regulate RIGI through USP15-mediated 'Lys-63'-linked deubiquitination. Interacts with UBTF. In terms of assembly, (Microbial infection) Interacts with herpes simplex virus 1 early proteins ICP22 and ICP0. As to quaternary structure, (Microbial infection) Interacts with Human herpesvirus 8 protein ORF16; may sequester ORF16 in host nucleolus and reduce its antiapoptotic activity. Post-translationally, ubiquitin-mediated proteasomal degradation is regulated by c-JUN. It is associated with relocalization to the nucleoplasm and decreased homooligomerization. Phosphorylated upon DNA damage probably by ATM and DNA-PK; may regulate NOP53 degradation. As to expression, expressed at high levels in heart and pancreas, moderate levels in placenta, liver, skeletal muscle, and kidney, and low levels in brain and lung.

It localises to the nucleus. Its subcellular location is the nucleolus. It is found in the nucleoplasm. Nucleolar protein which is involved in the integration of the 5S RNP into the ribosomal large subunit during ribosome biogenesis. In ribosome biogenesis, may also play a role in rRNA transcription. Also functions as a nucleolar sensor that regulates the activation of p53/TP53 in response to ribosome biogenesis perturbation, DNA damage and other stress conditions. DNA damage or perturbation of ribosome biogenesis disrupt the interaction between NOP53 and RPL11 allowing RPL11 transport to the nucleoplasm where it can inhibit MDM2 and allow p53/TP53 activation. It may also positively regulate the function of p53/TP53 in cell cycle arrest and apoptosis through direct interaction, preventing its MDM2-dependent ubiquitin-mediated proteasomal degradation. Originally identified as a tumor suppressor, it may also play a role in cell proliferation and apoptosis by positively regulating the stability of PTEN, thereby antagonizing the PI3K-AKT/PKB signaling pathway. May also inhibit cell proliferation and increase apoptosis through its interaction with NF2. May negatively regulate NPM1 by regulating its nucleoplasmic localization, oligomerization and ubiquitin-mediated proteasomal degradation. Thereby, may prevent NPM1 interaction with MYC and negatively regulate transcription mediated by the MYC-NPM1 complex. May also regulate cellular aerobic respiration. In the cellular response to viral infection, may play a role in the attenuation of interferon-beta through the inhibition of RIGI. The chain is Ribosome biogenesis protein NOP53 from Homo sapiens (Human).